A 467-amino-acid polypeptide reads, in one-letter code: Ribulose bisphosphate carboxylase large chain (467 aa).

Lysine 5 carries the N6,N6,N6-trimethyllysine modification. Residues asparagine 114 and threonine 164 each coordinate substrate. Lysine 166 acts as the Proton acceptor in catalysis. Substrate is bound at residue lysine 168. Residues lysine 192, aspartate 194, and glutamate 195 each coordinate Mg(2+). Lysine 192 carries the post-translational modification N6-carboxylysine. The active-site Proton acceptor is histidine 285. Positions 286, 318, and 370 each coordinate substrate.

The protein belongs to the RuBisCO large chain family. Type I subfamily. In terms of assembly, heterohexadecamer of 8 large chains and 8 small chains; disulfide-linked. The disulfide link is formed within the large subunit homodimers. Requires Mg(2+) as cofactor. The disulfide bond which can form in the large chain dimeric partners within the hexadecamer appears to be associated with oxidative stress and protein turnover.

The protein localises to the plastid. It is found in the chloroplast. The catalysed reaction is 2 (2R)-3-phosphoglycerate + 2 H(+) = D-ribulose 1,5-bisphosphate + CO2 + H2O. It catalyses the reaction D-ribulose 1,5-bisphosphate + O2 = 2-phosphoglycolate + (2R)-3-phosphoglycerate + 2 H(+). In terms of biological role, ruBisCO catalyzes two reactions: the carboxylation of D-ribulose 1,5-bisphosphate, the primary event in carbon dioxide fixation, as well as the oxidative fragmentation of the pentose substrate in the photorespiration process. Both reactions occur simultaneously and in competition at the same active site. The sequence is that of Ribulose bisphosphate carboxylase large chain from Scutellaria bolanderi (Sierra skullcap).